A 501-amino-acid chain; its full sequence is ATP synthase subunit beta (501 aa).

153–160 is a binding site for ATP; it reads GGAGVGKT.

The protein belongs to the ATPase alpha/beta chains family. As to quaternary structure, F-type ATPases have 2 components, CF(1) - the catalytic core - and CF(0) - the membrane proton channel. CF(1) has five subunits: alpha(3), beta(3), gamma(1), delta(1), epsilon(1). CF(0) has three main subunits: a(1), b(2) and c(9-12). The alpha and beta chains form an alternating ring which encloses part of the gamma chain. CF(1) is attached to CF(0) by a central stalk formed by the gamma and epsilon chains, while a peripheral stalk is formed by the delta and b chains.

The protein resides in the cell inner membrane. It catalyses the reaction ATP + H2O + 4 H(+)(in) = ADP + phosphate + 5 H(+)(out). In terms of biological role, produces ATP from ADP in the presence of a proton gradient across the membrane. The catalytic sites are hosted primarily by the beta subunits. The polypeptide is ATP synthase subunit beta (Cytophaga hutchinsonii (strain ATCC 33406 / DSM 1761 / CIP 103989 / NBRC 15051 / NCIMB 9469 / D465)).